Here is a 242-residue protein sequence, read N- to C-terminus: uncharacterized protein (242 aa).

Over residues 1-12 the composition is skewed to basic and acidic residues; that stretch reads MKLRRERFERRN. The tract at residues 1-21 is disordered; that stretch reads MKLRRERFERRNGSGKNSQSS. The Cytoplasmic portion of the chain corresponds to 1–23; that stretch reads MKLRRERFERRNGSGKNSQSSSS. A helical membrane pass occupies residues 24 to 44; it reads WMVTFTDLITLILVFFILLFS. At 45 to 242 the chain is on the extracellular side; it reads MSQIDLQKFK…VIKKSKTTSS (198 aa). The tract at residues 64–91 is disordered; that stretch reads GNGLQPDQTSIEKKNTSPSDTKKQEDQQ. Residues 73–89 are compositionally biased toward basic and acidic residues; the sequence is SIEKKNTSPSDTKKQED. Positions 117-238 constitute an OmpA-like domain; that stretch reads ERGVVLVLQE…RVEIVIKKSK (122 aa).

The protein belongs to the MotB family.

Its subcellular location is the cell membrane. May be involved in some transport function. This is an uncharacterized protein from Bacillus subtilis (strain 168).